Reading from the N-terminus, the 275-residue chain is Autophagy protein 5 (275 aa).

At methionine 1 the chain carries N-acetylmethionine. Lysine 130 participates in a covalent cross-link: Glycyl lysine isopeptide (Lys-Gly) (interchain with G-Cter in ATG12).

This sequence belongs to the ATG5 family. As to quaternary structure, forms a conjugate with ATG12. Part of the minor complex composed of 4 sets of ATG12-ATG5 and ATG16L1 (400 kDa); this complex interacts with ATG3 leading to disruption of ATG7 interaction and promotion of ATG8-like proteins lipidation. Forms an 800-kDa complex composed of ATG12-ATG5 and ATG16L2. The ATG12-ATG5 conjugate interacts with RAB33A; this interaction is bridged by ATG16L1 and promotes ATG12-ATG5-ATG16L1 complex recruitment to phagophores. Interacts with TECPR1; the interaction is direct and does not take place when ATG16L1 is associated with the ATG5-ATG12 conjugate. Interacts with DHX58/RIG-1, IFIH1/MDA5 and MAVS/IPS-1 in monomeric form as well as in ATG12-ATG5 conjugate form. The interaction with MAVS is further enhanced upon vesicular stomatitis virus (VSV) infection. Interacts with ATG3. Interacts with ATG7 and ATG10. Interacts with FADD. Interacts with Bassoon/BSN; this interaction is important for the regulation of presynaptic autophagy. Interacts with ATG16L2. Conjugated to ATG12; which is essential for autophagy, but is not required for association with isolation membrane. In terms of processing, acetylated by EP300.

The protein localises to the cytoplasm. The protein resides in the preautophagosomal structure membrane. Functionally, involved in autophagic vesicle formation. Conjugation with ATG12, through a ubiquitin-like conjugating system involving ATG7 as an E1-like activating enzyme and ATG10 as an E2-like conjugating enzyme, is essential for its function. The ATG12-ATG5 conjugate acts as an E3-like enzyme which is required for lipidation of ATG8 family proteins and their association to the vesicle membranes. Involved in mitochondrial quality control after oxidative damage, and in subsequent cellular longevity. Plays a critical role in multiple aspects of lymphocyte development and is essential for both B and T lymphocyte survival and proliferation. Required for optimal processing and presentation of antigens for MHC II. Involved in the maintenance of axon morphology and membrane structures, as well as in normal adipocyte differentiation. Promotes primary ciliogenesis through removal of OFD1 from centriolar satellites and degradation of IFT20 via the autophagic pathway. As part of the ATG8 conjugation system with ATG12 and ATG16L1, required for recruitment of LRRK2 to stressed lysosomes and induction of LRRK2 kinase activity in response to lysosomal stress. In terms of biological role, may play an important role in the apoptotic process, possibly within the modified cytoskeleton. Its expression is a relatively late event in the apoptotic process, occurring downstream of caspase activity. Plays a crucial role in IFN-gamma-induced autophagic cell death by interacting with FADD. The sequence is that of Autophagy protein 5 from Bos taurus (Bovine).